Consider the following 470-residue polypeptide: 3-isopropylmalate dehydratase large subunit (470 aa).

[4Fe-4S] cluster contacts are provided by C349, C409, and C412.

The protein belongs to the aconitase/IPM isomerase family. LeuC type 1 subfamily. As to quaternary structure, heterodimer of LeuC and LeuD. Requires [4Fe-4S] cluster as cofactor.

The catalysed reaction is (2R,3S)-3-isopropylmalate = (2S)-2-isopropylmalate. Its pathway is amino-acid biosynthesis; L-leucine biosynthesis; L-leucine from 3-methyl-2-oxobutanoate: step 2/4. Catalyzes the isomerization between 2-isopropylmalate and 3-isopropylmalate, via the formation of 2-isopropylmaleate. The chain is 3-isopropylmalate dehydratase large subunit from Methylobacterium radiotolerans (strain ATCC 27329 / DSM 1819 / JCM 2831 / NBRC 15690 / NCIMB 10815 / 0-1).